Here is a 355-residue protein sequence, read N- to C-terminus: Galectin-9 (355 aa).

Galectin domains follow at residues 17 to 148 and 227 to 355; these read FSGT…ISFQ and FITT…HVQT. A beta-D-galactoside is bound by residues Asn48, His61, Arg65, Asn75, 82–88, His267, Arg271, Thr281, and 287–293; these read WGPEERK and WGSEERS.

As to quaternary structure, monomer. As to expression, peripheral blood leukocytes and lymphatic tissues. Expressed in lung, liver, breast and kidney with higher levels in tumor endothelial cells than normal endothelium (at protein level). Expressed in trophoblast cells in decidua and placenta in pregnancy (at protein level). Isoform 2 is the most abundant isoform expressed in endothelial cells. Upon endothelial cell activation isoform 2 expression decreases while expression of isoform 3 and isoform 5 increases. Isoform 4 decreases in pathological pregnancy.

It localises to the cytoplasm. Its subcellular location is the nucleus. The protein resides in the secreted. Binds galactosides. Has high affinity for the Forssman pentasaccharide. Ligand for HAVCR2/TIM3. Binding to HAVCR2 induces T-helper type 1 lymphocyte (Th1) death. Also stimulates bactericidal activity in infected macrophages by causing macrophage activation and IL1B secretion which restricts intracellular bacterial growth. Ligand for P4HB; the interaction retains P4HB at the cell surface of Th2 T-helper cells, increasing disulfide reductase activity at the plasma membrane, altering the plasma membrane redox state and enhancing cell migration. Ligand for CD44; the interaction enhances binding of SMAD3 to the FOXP3 promoter, leading to up-regulation of FOXP3 expression and increased induced regulatory T (iTreg) cell stability and suppressive function. Promotes ability of mesenchymal stromal cells to suppress T-cell proliferation. Expands regulatory T-cells and induces cytotoxic T-cell apoptosis following virus infection. Activates ERK1/2 phosphorylation inducing cytokine (IL-6, IL-8, IL-12) and chemokine (CCL2) production in mast and dendritic cells. Inhibits degranulation and induces apoptosis of mast cells. Induces maturation and migration of dendritic cells. Inhibits natural killer (NK) cell function. Can transform NK cell phenotype from peripheral to decidual during pregnancy. Astrocyte derived galectin-9 enhances microglial TNF production. May play a role in thymocyte-epithelial interactions relevant to the biology of the thymus. May provide the molecular basis for urate flux across cell membranes, allowing urate that is formed during purine metabolism to efflux from cells and serving as an electrogenic transporter that plays an important role in renal and gastrointestinal urate excretion. Highly selective to the anion urate. Functionally, acts as an eosinophil chemoattractant. It also inhibits angiogenesis. Suppresses IFNG production by natural killer cells. The sequence is that of Galectin-9 (LGALS9) from Homo sapiens (Human).